We begin with the raw amino-acid sequence, 385 residues long: 1-deoxy-D-xylulose 5-phosphate reductoisomerase (385 aa).

6 residues coordinate NADPH: Thr10, Gly11, Ser12, Ile13, Asn38, and Asn124. Lys125 serves as a coordination point for 1-deoxy-D-xylulose 5-phosphate. Glu126 lines the NADPH pocket. Position 150 (Asp150) interacts with Mn(2+). The 1-deoxy-D-xylulose 5-phosphate site is built by Ser151, Glu152, Ser176, and His199. Residue Glu152 participates in Mn(2+) binding. Gly205 contacts NADPH. Positions 212, 217, 218, and 221 each coordinate 1-deoxy-D-xylulose 5-phosphate. Glu221 serves as a coordination point for Mn(2+).

The protein belongs to the DXR family. It depends on Mg(2+) as a cofactor. The cofactor is Mn(2+).

The catalysed reaction is 2-C-methyl-D-erythritol 4-phosphate + NADP(+) = 1-deoxy-D-xylulose 5-phosphate + NADPH + H(+). Its pathway is isoprenoid biosynthesis; isopentenyl diphosphate biosynthesis via DXP pathway; isopentenyl diphosphate from 1-deoxy-D-xylulose 5-phosphate: step 1/6. Catalyzes the NADPH-dependent rearrangement and reduction of 1-deoxy-D-xylulose-5-phosphate (DXP) to 2-C-methyl-D-erythritol 4-phosphate (MEP). The chain is 1-deoxy-D-xylulose 5-phosphate reductoisomerase from Clostridium acetobutylicum (strain ATCC 824 / DSM 792 / JCM 1419 / IAM 19013 / LMG 5710 / NBRC 13948 / NRRL B-527 / VKM B-1787 / 2291 / W).